The chain runs to 312 residues: Olfactory receptor 2M5 (312 aa).

Over 1-25 (MAWENQTFNSDFILLGIFNHSPTHT) the chain is Extracellular. The N-linked (GlcNAc...) asparagine glycan is linked to Asn5. The helical transmembrane segment at 26–49 (FLFFLVLAIFSVAFMGNSVMVLLI) threads the bilayer. Over 50-57 (YLDTQLHT) the chain is Cytoplasmic. The helical transmembrane segment at 58–79 (PMYFLLSQLFLMDLMLICSTVP) threads the bilayer. Over 80–100 (KMAFNYLSGSKSISMAGCATQ) the chain is Extracellular. A disulfide bond links Cys97 and Cys189. A helical transmembrane segment spans residues 101 to 120 (IFFYVSLLGSECFLLAVMSY). Topologically, residues 121–139 (DRYIAICHPLRYTNLMRPK) are cytoplasmic. Residues 140-158 (ICGLMTAFSWILGSMDAII) form a helical membrane-spanning segment. Topologically, residues 159-195 (DAVATFSFSYCGSREIAHFFCDFPSLLILSCNDTSIF) are extracellular. The chain crosses the membrane as a helical span at residues 196 to 219 (EKVLFICCIVMIVFPVAIIIASYA). Over 220–236 (RVILAVIHMGSGEGRRK) the chain is Cytoplasmic. A helical transmembrane segment spans residues 237-259 (AFTTCSSHLMVVGMYYGAGLFMY). Over 260-272 (IRPTSDRSPMQDK) the chain is Extracellular. A helical membrane pass occupies residues 273 to 292 (LVSVFYTILTPMLNPLIYSL). At 293–311 (RNKEVTRALRKVLGKGKCG) the chain is on the cytoplasmic side.

Belongs to the G-protein coupled receptor 1 family.

It localises to the cell membrane. Odorant receptor. This chain is Olfactory receptor 2M5 (OR2M5), found in Homo sapiens (Human).